The following is a 1256-amino-acid chain: Protein flightless-1 (1256 aa).

LRR repeat units lie at residues 4-28 (LPFVRGVDFTKNDFSATFPSSMRQM), 29-51 (SRVQWLTLDRTQLAEIPEELGHL), 52-74 (QKLEHLSLNHNRLEKIFGELTEL), 75-99 (SCLRSLDLRHNQLKNSGIPPELFHL), 100-122 (EELTTLDLSHNKLKEVPEGLERA), 124-145 (NLIVLNLSNNQIESIPTPLFIH), 147-169 (TDLLFLDLSHNRLETLPPQTRRL), 171-192 (NLKTLDLSHNPLELFQLRQLPS), 218-241 (LANLCELDLSHNSLPKLPDCVYNV), 243-264 (TLVRLNLSDNELTELTAGVELW), 265-287 (QRLESLNLSRNQLVALPAALCKL), 289-312 (KLRRLLVNDNKLNFEGIPSGIGKL), 313-335 (GALEVFSAANNLLEMVPEGLCRC), 336-358 (GALKQLNLSCNRLITLPDAIHLL), and 360-381 (GLDQLDLRNNPELVMPPKPSEA). The disordered stretch occupies residues 405 to 476 (AAVPPSMPSS…ESLKPKRWDE (72 aa)). A compositionally biased stretch (basic and acidic residues) spans 431-476 (PRSEGDQDAAKVLKGMKDVAKDKDNEAGAVPEDGKPESLKPKRWDE). 4 Gelsolin-like repeats span residues 512 to 589 (IEEV…EQFL), 633 to 703 (EPVA…AEFW), 749 to 822 (VELP…MQIF), and 1168 to 1242 (EKCA…SRRF).

Belongs to the villin/gelsolin family. Found in ovaries, larval fat bodies, brain and adult thorax.

In terms of biological role, may play a key role in embryonic cellularization by interacting with both the cytoskeleton and other cellular components. Alternatively, it may play a structural role in indirect flight muscle. Vital for embryonic development. The polypeptide is Protein flightless-1 (fliI) (Drosophila melanogaster (Fruit fly)).